Reading from the N-terminus, the 673-residue chain is UvrABC system protein B (673 aa).

One can recognise a Helicase ATP-binding domain in the interval 26 to 183 (EGLEDGLAHQ…RRLAELQYTR (158 aa)). 39–46 (GVTGSGKT) contacts ATP. Positions 92–115 (YYDYYQPEAYVPSSDTFIEKDASV) match the Beta-hairpin motif. The Helicase C-terminal domain maps to 431–597 (QVDDLLSEIR…GLNKKVVDIL (167 aa)). Residues 633 to 668 (QQKIHELEGQMMQHAQNLEFEEAAQIRDQLHQLREL) enclose the UVR domain.

The protein belongs to the UvrB family. As to quaternary structure, forms a heterotetramer with UvrA during the search for lesions. Interacts with UvrC in an incision complex.

It is found in the cytoplasm. Functionally, the UvrABC repair system catalyzes the recognition and processing of DNA lesions. A damage recognition complex composed of 2 UvrA and 2 UvrB subunits scans DNA for abnormalities. Upon binding of the UvrA(2)B(2) complex to a putative damaged site, the DNA wraps around one UvrB monomer. DNA wrap is dependent on ATP binding by UvrB and probably causes local melting of the DNA helix, facilitating insertion of UvrB beta-hairpin between the DNA strands. Then UvrB probes one DNA strand for the presence of a lesion. If a lesion is found the UvrA subunits dissociate and the UvrB-DNA preincision complex is formed. This complex is subsequently bound by UvrC and the second UvrB is released. If no lesion is found, the DNA wraps around the other UvrB subunit that will check the other stand for damage. This Salmonella arizonae (strain ATCC BAA-731 / CDC346-86 / RSK2980) protein is UvrABC system protein B.